The following is a 341-amino-acid chain: UDP-3-O-(3-hydroxymyristoyl)glucosamine N-acyltransferase (341 aa).

Residue histidine 239 is the Proton acceptor of the active site.

The protein belongs to the transferase hexapeptide repeat family. LpxD subfamily. Homotrimer.

The catalysed reaction is a UDP-3-O-[(3R)-3-hydroxyacyl]-alpha-D-glucosamine + a (3R)-hydroxyacyl-[ACP] = a UDP-2-N,3-O-bis[(3R)-3-hydroxyacyl]-alpha-D-glucosamine + holo-[ACP] + H(+). It catalyses the reaction UDP-3-O-[(3R)-3-hydroxytetradecanoyl]-alpha-D-glucosamine + (3R)-hydroxytetradecanoyl-[ACP] = UDP-2-N,3-O-bis[(3R)-3-hydroxytetradecanoyl]-alpha-D-glucosamine + holo-[ACP] + H(+). Its pathway is glycolipid biosynthesis; lipid IV(A) biosynthesis; lipid IV(A) from (3R)-3-hydroxytetradecanoyl-[acyl-carrier-protein] and UDP-N-acetyl-alpha-D-glucosamine: step 3/6. Functionally, catalyzes the N-acylation of UDP-3-O-(hydroxytetradecanoyl)glucosamine using 3-hydroxytetradecanoyl-ACP as the acyl donor. Is involved in the biosynthesis of lipid A, a phosphorylated glycolipid that anchors the lipopolysaccharide to the outer membrane of the cell. In Salmonella choleraesuis (strain SC-B67), this protein is UDP-3-O-(3-hydroxymyristoyl)glucosamine N-acyltransferase.